The chain runs to 137 residues: Fluoride-specific ion channel FluC 1 (137 aa).

The next 4 membrane-spanning stretches (helical) occupy residues 3-23, 42-62, 69-89, and 107-127; these read PLVV…RLVL, INVT…GHGL, ILGT…YEAV, and MMFL…LAVA. Gly76 and Thr79 together coordinate Na(+).

This sequence belongs to the fluoride channel Fluc/FEX (TC 1.A.43) family.

It is found in the cell membrane. It carries out the reaction fluoride(in) = fluoride(out). Its activity is regulated as follows. Na(+) is not transported, but it plays an essential structural role and its presence is essential for fluoride channel function. Its function is as follows. Fluoride-specific ion channel. Important for reducing fluoride concentration in the cell, thus reducing its toxicity. The polypeptide is Fluoride-specific ion channel FluC 1 (Leifsonia xyli subsp. xyli (strain CTCB07)).